Reading from the N-terminus, the 502-residue chain is Uric acid degradation bifunctional protein (502 aa).

The OHCU decarboxylase stretch occupies residues 1 to 178 (MMRLKQLNEM…NSMTKHKERV (178 aa)). Histidine 68 (proton donor; for OHCU decarboxylase activity) is an active-site residue. 5-hydroxy-2-oxo-4-ureido-2,5-dihydro-1H-imidazole-5-carboxylate-binding positions include proline 69, 81-85 (SQEEQ), and 116-120 (FVMAV). A urate oxidase region spans residues 179-502 (MYYGKGDVFA…DEPDHKGALK (324 aa)). Catalysis depends on lysine 183, which acts as the Charge relay system; for urate oxidase activity. Lysine 194 functions as the Charge relay system in the catalytic mechanism. The Charge relay system; for urate oxidase activity role is filled by threonine 243. Urate contacts are provided by threonine 243, aspartate 244, phenylalanine 354, arginine 371, isoleucine 419, glutamine 420, and asparagine 446.

This sequence in the N-terminal section; belongs to the OHCU decarboxylase family. It in the C-terminal section; belongs to the uricase family.

It carries out the reaction 5-hydroxy-2-oxo-4-ureido-2,5-dihydro-1H-imidazole-5-carboxylate + H(+) = (S)-allantoin + CO2. The catalysed reaction is urate + O2 + H2O = 5-hydroxyisourate + H2O2. It participates in purine metabolism; urate degradation; (S)-allantoin from urate: step 1/3. The protein operates within purine metabolism; urate degradation; (S)-allantoin from urate: step 3/3. Functionally, catalyzes two steps in the degradation of uric acid, i.e. the oxidation of uric acid to 5-hydroxyisourate (HIU) and the stereoselective decarboxylation of 2-oxo-4-hydroxy-4-carboxy-5-ureidoimidazoline (OHCU) to (S)-allantoin. This chain is Uric acid degradation bifunctional protein (uao), found in Bacillus sp. (strain TB-90).